The chain runs to 629 residues: Tudor and KH domain-containing protein homolog (629 aa).

The chain crosses the membrane as a helical span at residues 9 to 29 (LPIALGLSLVTVTAFVAYYVL). KH domains lie at 46–109 (INTI…ETLI) and 119–185 (IMSE…KKLV). The segment at 198–240 (IEQSKRPPRHSSSPPSPCPSPGDRDADADAQGDVDHTRVKYKR) is disordered. Residues 219-240 (GDRDADADAQGDVDHTRVKYKR) are compositionally biased toward basic and acidic residues. The Tudor domain maps to 297–362 (HVSVGQVVAA…CELRADLLRL (66 aa)). A disordered region spans residues 464–526 (PAPSPRPSPP…GDDSKDKDGI (63 aa)).

It belongs to the Tdrkh family. In terms of assembly, interacts with (symmetrically methylated) Siwi. Interacts with (symmetrically methylated) Ago3. Interacts with PNLDC1/trimmer; interaction takes place on the mitochondrial surface and recruits PNLDC1/trimmer to Siwi-bound pre-piRNAs.

Its subcellular location is the mitochondrion outer membrane. Functionally, participates in the primary piRNA biogenesis pathway and is required during spermatogenesis to repress transposable elements and prevent their mobilization, which is essential for the germline integrity. The piRNA metabolic process mediates the repression of transposable elements during meiosis by forming complexes composed of piRNAs and Piwi proteins (Siwi or Ago3) and govern the methylation and subsequent repression of transposons. Required for the final steps of primary piRNA biogenesis by participating in the processing of 31-37 nt intermediates into mature piRNAs: acts by recruiting the exonuclease PNLDC1/trimmer to Siwi-bound pre-piRNAs. The chain is Tudor and KH domain-containing protein homolog from Bombyx mori (Silk moth).